The following is a 581-amino-acid chain: Multicopper oxidase LPR1 (581 aa).

The first 28 residues, 1–28, serve as a signal peptide directing secretion; it reads MESLLCRRRIKRVMVLIIALTWLRSTCG. Residues His148, His150, His196, and His198 each coordinate Cu cation. Residues Asn254, Asn298, Asn386, and Asn458 are each glycosylated (N-linked (GlcNAc...) asparagine). The 70-residue stretch at 283–352 folds into the Plastocyanin-like domain; that stretch reads PRLNVRRRKY…DVVVDFYKSP (70 aa). 3 residues coordinate Cu cation: His464, His467, and His469. Asn546 carries N-linked (GlcNAc...) asparagine glycosylation. Cu cation contacts are provided by His562, Cys563, His564, His568, and Met573.

This sequence belongs to the multicopper oxidase family. It depends on Cu cation as a cofactor.

It localises to the endoplasmic reticulum membrane. In terms of biological role, multicopper oxidase that may be involved in copper homeostasis and oxidative stress response, and that is necessary for root growth inhibition by low phosphate conditions. Functions together with LPR2 and PDR2 in a common pathway that adjusts root meristem activity to phosphate availability. Oxidizes the substrate 2,2'-azinobis-(3-ethylbenzthiazoline-6-sulphonate) in vitro. The chain is Multicopper oxidase LPR1 (LPR1) from Arabidopsis thaliana (Mouse-ear cress).